A 193-amino-acid chain; its full sequence is Outer membrane lipoprotein DolP (193 aa).

A signal peptide spans 1 to 21 (MTLSPLKKLAILLGATIFLQG). C22 is lipidated: N-palmitoyl cysteine. The S-diacylglycerol cysteine moiety is linked to residue C22. 2 consecutive BON domains span residues 48-117 (DDET…TVSP) and 126-193 (KDSW…KYLD).

It belongs to the lipoprotein DolP family.

The protein resides in the cell outer membrane. Plays an important role in maintaining outer membrane integrity. This Haemophilus influenzae (strain ATCC 51907 / DSM 11121 / KW20 / Rd) protein is Outer membrane lipoprotein DolP.